Reading from the N-terminus, the 271-residue chain is 3-methyl-2-oxobutanoate hydroxymethyltransferase (271 aa).

Mg(2+) is bound by residues Asp53 and Asp92. Residues 53–54 (DS), Asp92, and Lys120 contribute to the 3-methyl-2-oxobutanoate site. Mg(2+) is bound at residue Glu122. Glu189 functions as the Proton acceptor in the catalytic mechanism.

It belongs to the PanB family. In terms of assembly, homodecamer; pentamer of dimers. It depends on Mg(2+) as a cofactor.

The protein resides in the cytoplasm. The enzyme catalyses 3-methyl-2-oxobutanoate + (6R)-5,10-methylene-5,6,7,8-tetrahydrofolate + H2O = 2-dehydropantoate + (6S)-5,6,7,8-tetrahydrofolate. It functions in the pathway cofactor biosynthesis; (R)-pantothenate biosynthesis; (R)-pantoate from 3-methyl-2-oxobutanoate: step 1/2. Catalyzes the reversible reaction in which hydroxymethyl group from 5,10-methylenetetrahydrofolate is transferred onto alpha-ketoisovalerate to form ketopantoate. This chain is 3-methyl-2-oxobutanoate hydroxymethyltransferase, found in Burkholderia thailandensis (strain ATCC 700388 / DSM 13276 / CCUG 48851 / CIP 106301 / E264).